A 506-amino-acid chain; its full sequence is Cobyric acid synthase (506 aa).

One can recognise a GATase cobBQ-type domain in the interval aspartate 251–phenylalanine 448. The active-site Nucleophile is cysteine 332. Residue histidine 440 is part of the active site.

This sequence belongs to the CobB/CobQ family. CobQ subfamily.

It functions in the pathway cofactor biosynthesis; adenosylcobalamin biosynthesis. Catalyzes amidations at positions B, D, E, and G on adenosylcobyrinic A,C-diamide. NH(2) groups are provided by glutamine, and one molecule of ATP is hydrogenolyzed for each amidation. The chain is Cobyric acid synthase from Salmonella dublin (strain CT_02021853).